The chain runs to 114 residues: Fluoride-specific ion channel FluC 2 (114 aa).

The next 3 helical transmembrane spans lie at 30 to 50, 57 to 77, and 88 to 108; these read FPVA…LLSG, TFAL…TFAV, and ALPS…AAWL. Glycine 67 and threonine 70 together coordinate Na(+).

This sequence belongs to the fluoride channel Fluc/FEX (TC 1.A.43) family.

Its subcellular location is the cell membrane. The catalysed reaction is fluoride(in) = fluoride(out). Na(+) is not transported, but it plays an essential structural role and its presence is essential for fluoride channel function. Fluoride-specific ion channel. Important for reducing fluoride concentration in the cell, thus reducing its toxicity. This is Fluoride-specific ion channel FluC 2 from Rhodococcus jostii (strain RHA1).